Consider the following 237-residue polypeptide: Phosphoribosylaminoimidazole-succinocarboxamide synthase (237 aa).

This sequence belongs to the SAICAR synthetase family.

It carries out the reaction 5-amino-1-(5-phospho-D-ribosyl)imidazole-4-carboxylate + L-aspartate + ATP = (2S)-2-[5-amino-1-(5-phospho-beta-D-ribosyl)imidazole-4-carboxamido]succinate + ADP + phosphate + 2 H(+). The protein operates within purine metabolism; IMP biosynthesis via de novo pathway; 5-amino-1-(5-phospho-D-ribosyl)imidazole-4-carboxamide from 5-amino-1-(5-phospho-D-ribosyl)imidazole-4-carboxylate: step 1/2. The chain is Phosphoribosylaminoimidazole-succinocarboxamide synthase from Shigella sonnei (strain Ss046).